A 324-amino-acid polypeptide reads, in one-letter code: tRNA pseudouridine synthase B (324 aa).

Residue Asp-49 is the Nucleophile of the active site. A disordered region spans residues 87–107 (RSTDDLEGQPTKTSDKRPSRE).

Belongs to the pseudouridine synthase TruB family. Type 1 subfamily.

The catalysed reaction is uridine(55) in tRNA = pseudouridine(55) in tRNA. Responsible for synthesis of pseudouridine from uracil-55 in the psi GC loop of transfer RNAs. In Brucella melitensis biotype 1 (strain ATCC 23456 / CCUG 17765 / NCTC 10094 / 16M), this protein is tRNA pseudouridine synthase B.